A 691-amino-acid chain; its full sequence is Elongation factor G (691 aa).

In terms of domain architecture, tr-type G spans 6–281 (SRYRNIGIMA…GVVDFLPSPI (276 aa)). Residues 15 to 22 (AHIDAGKT), 79 to 83 (DTPGH), and 133 to 136 (NKMD) contribute to the GTP site.

Belongs to the TRAFAC class translation factor GTPase superfamily. Classic translation factor GTPase family. EF-G/EF-2 subfamily.

It localises to the cytoplasm. Catalyzes the GTP-dependent ribosomal translocation step during translation elongation. During this step, the ribosome changes from the pre-translocational (PRE) to the post-translocational (POST) state as the newly formed A-site-bound peptidyl-tRNA and P-site-bound deacylated tRNA move to the P and E sites, respectively. Catalyzes the coordinated movement of the two tRNA molecules, the mRNA and conformational changes in the ribosome. This is Elongation factor G from Wolbachia pipientis subsp. Culex pipiens (strain wPip).